A 428-amino-acid chain; its full sequence is Dihydroorotase (428 aa).

Zn(2+) contacts are provided by His59 and His61. Residues 61–63 and Asn93 each bind substrate; that span reads HLR. Residues Asp151, His178, and His231 each coordinate Zn(2+). Asn277 contacts substrate. Asp304 lines the Zn(2+) pocket. The active site involves Asp304. Residues His308 and 322 to 323 each bind substrate; that span reads FG.

Belongs to the metallo-dependent hydrolases superfamily. DHOase family. Class I DHOase subfamily. The cofactor is Zn(2+).

It carries out the reaction (S)-dihydroorotate + H2O = N-carbamoyl-L-aspartate + H(+). The protein operates within pyrimidine metabolism; UMP biosynthesis via de novo pathway; (S)-dihydroorotate from bicarbonate: step 3/3. Its function is as follows. Catalyzes the reversible cyclization of carbamoyl aspartate to dihydroorotate. The polypeptide is Dihydroorotase (Bacillus cereus (strain B4264)).